The sequence spans 181 residues: UPF0398 protein LMOf2365_1918 (181 aa).

This sequence belongs to the UPF0398 family.

The protein is UPF0398 protein LMOf2365_1918 of Listeria monocytogenes serotype 4b (strain F2365).